Reading from the N-terminus, the 260-residue chain is Putative ABC transporter ATP-binding protein PYRAB01300 (260 aa).

The ABC transporter domain occupies 2–234 (IEFKDVWFWY…DLRNFSLVEP (233 aa)). Residue 34–41 (GPNGSGKT) coordinates ATP.

It belongs to the ABC transporter superfamily.

The protein resides in the cell membrane. Probably part of an ABC transporter complex. Responsible for energy coupling to the transport system. This chain is Putative ABC transporter ATP-binding protein PYRAB01300, found in Pyrococcus abyssi (strain GE5 / Orsay).